A 693-amino-acid chain; its full sequence is Tegument protein UL47 (693 aa).

Disordered stretches follow at residues 1–32 (MSAREPAGRRRRASTRPRASPVADEPAGDGVG) and 48–126 (ELEA…GYLG). The segment covering 48–57 (ELEALEEMAG) has biased composition (acidic residues). Positions 50-75 (EALEEMAGDEPPVRRRREGPRARRRR) are RNA-binding. Positions 63 to 75 (RRRREGPRARRRR) match the Nuclear localization signal motif. Basic residues predominate over residues 63 to 75 (RRRREGPRARRRR). The Nuclear export signal motif lies at 647–670 (SVLGPRVRVVDIMSQFRKLLMGDE).

This sequence belongs to the alphaherpesvirinae HHV-1 UL47 family. In terms of assembly, interacts with US3 kinase. Interacts with UL31 and UL34; these interactions seem important for efficient virion nuclear egress. Interacts with UL41/VHS. Post-translationally, phosphorylated by US3. This phosphorylation is required for proper nuclear localization.

The protein localises to the virion tegument. It is found in the host nucleus. The protein resides in the host cytoplasm. Its function is as follows. Tegument protein that can bind to various RNA transcripts. Plays a role in the attenuation of selective viral and cellular mRNA degradation by modulating the activity of host shutoff RNase UL41/VHS. Also plays a role in the primary envelopment of virions in the perinuclear space, probably by interacting with two nuclear egress proteins UL31 and UL34. The protein is Tegument protein UL47 of Homo sapiens (Human).